A 155-amino-acid chain; its full sequence is MAEGEITTFSALTERFNLPPGNYKKPKLLYCSNGGHFLRILPDGTVDGTRDRSDQHIQLQLSAESAGEVYIKGTETGQYLAMDTDGLLYGSQTPNEECLFLERLEENHYNTYTSKKHAEKNWFVGLKKNGSCKRGPRTHYGQKAILFLPLPVSSD.

N-acetylalanine is present on Ala2. Positions 2–15 are excised as a propeptide; it reads AEGEITTFSALTER. Asn33 contributes to the heparin binding site. Residues 127-143 are heparin-binding; the sequence is KKNGSCKRGPRTHYGQK.

This sequence belongs to the heparin-binding growth factors family. As to quaternary structure, monomer. Homodimer. Interacts with FGFR1, FGFR2, FGFR3 and FGFR4. Affinity between fibroblast growth factors (FGFs) and their receptors is increased by heparan sulfate glycosaminoglycans that function as coreceptors. Found in a complex with FGFBP1, FGF1 and FGF2. Interacts with FGFBP1. Part of a Cu(2+)-dependent multiprotein aggregate containing FGF1, S100A13 and SYT1. Interacts with SYT1. Interacts with S100A13. Interacts with LRRC59. Interacts with CSNKA, CSNKB and FIBP. While binding with LRRC59, CSNKA and FIBP seem mutually exclusive, CSNKB and FIBP may cooperatively interact with FGF1. Forms a ternary complex with FGFR1 and ITGAV:ITGB3 and induces the recruitment of PTPN11 to the complex. In terms of processing, in the nucleus, phosphorylated by PKC/PRKCD.

The protein localises to the secreted. Its subcellular location is the cytoplasm. The protein resides in the cell cortex. It localises to the cytosol. It is found in the nucleus. Functionally, plays an important role in the regulation of cell survival, cell division, angiogenesis, cell differentiation and cell migration. Functions as a potent mitogen in vitro. Acts as a ligand for FGFR1 and integrins. Binds to FGFR1 in the presence of heparin leading to FGFR1 dimerization and activation via sequential autophosphorylation on tyrosine residues which act as docking sites for interacting proteins, leading to the activation of several signaling cascades. Binds to integrin ITGAV:ITGB3. Its binding to integrin, subsequent ternary complex formation with integrin and FGFR1, and the recruitment of PTPN11 to the complex are essential for FGF1 signaling. Induces the phosphorylation and activation of FGFR1, FRS2, MAPK3/ERK1, MAPK1/ERK2 and AKT1. Can induce angiogenesis. This chain is Fibroblast growth factor 1 (FGF1), found in Mesocricetus auratus (Golden hamster).